Reading from the N-terminus, the 63-residue chain is Conotoxin Cal12.5 (63 aa).

Positions 1 to 21 (MKVTCVLVVLLLLLPYGDLLG) are cleaved as a signal peptide.

The protein belongs to the conotoxin O1 superfamily. Contains 4 disulfide bonds. In terms of tissue distribution, expressed by the venom duct.

Its subcellular location is the secreted. In terms of biological role, probable neurotoxin. The protein is Conotoxin Cal12.5 of Californiconus californicus (California cone).